A 145-amino-acid chain; its full sequence is Probable inactive ribonuclease-like protein 12 (145 aa).

Residues 1-19 (MILMVIVFLLLLFWENELT) form the signal peptide. Asn88 is a glycosylation site (N-linked (GlcNAc...) asparagine).

This sequence belongs to the pancreatic ribonuclease family.

The protein resides in the secreted. Its function is as follows. Does not exhibit any ribonuclease activity. In Rattus norvegicus (Rat), this protein is Probable inactive ribonuclease-like protein 12 (Rnase12).